A 191-amino-acid chain; its full sequence is MNDYTKYTIGVLSLQGAVSEHIAQIETLGAKAIAVKSLSELQQVDALVLPGGESTAMRRLMHSSGLFQALKSFDKPILGTCAGLILLANKLEGGEPPHLAKMNIQVQRNAFGRQVDSFQTDLMIKGFADSFPAVFIRAPYISRIGSEVEVLAEWQGNVVFAKQGNLLACAFHPELTSDTRVVELFLQQLKE.

52-54 (GES) serves as a coordination point for L-glutamine. The active-site Nucleophile is the Cys-81. L-glutamine is bound by residues Arg-108 and 136 to 137 (IR). Catalysis depends on charge relay system residues His-172 and Glu-174.

The protein belongs to the glutaminase PdxT/SNO family. In the presence of PdxS, forms a dodecamer of heterodimers. Only shows activity in the heterodimer.

It catalyses the reaction aldehydo-D-ribose 5-phosphate + D-glyceraldehyde 3-phosphate + L-glutamine = pyridoxal 5'-phosphate + L-glutamate + phosphate + 3 H2O + H(+). It carries out the reaction L-glutamine + H2O = L-glutamate + NH4(+). Its pathway is cofactor biosynthesis; pyridoxal 5'-phosphate biosynthesis. Catalyzes the hydrolysis of glutamine to glutamate and ammonia as part of the biosynthesis of pyridoxal 5'-phosphate. The resulting ammonia molecule is channeled to the active site of PdxS. The sequence is that of Pyridoxal 5'-phosphate synthase subunit PdxT from Actinobacillus pleuropneumoniae serotype 5b (strain L20).